A 134-amino-acid polypeptide reads, in one-letter code: MYYTSYRSQVFGVARIFASFNDTFVHVTDLSGKETIARVTGGMKVKADRDESSPYAAMLAAQDVAAKCKEVGITAVHIKLRATGGTKTKTPGPGGQSALRALARSGLRIGRIEDVTPVPSDSTRRKGGRRGRRL.

The segment at 114–134 is disordered; that stretch reads DVTPVPSDSTRRKGGRRGRRL. The segment covering 125–134 has biased composition (basic residues); the sequence is RKGGRRGRRL.

It belongs to the universal ribosomal protein uS11 family.

This is Small ribosomal subunit protein uS11 (RPS14) from Candida albicans (Yeast).